The sequence spans 324 residues: IDS-like terpene synthase 2 (324 aa).

Mg(2+)-binding residues include Asp77 and Asp81.

Belongs to the FPP/GGPP synthase family. Mg(2+) is required as a cofactor.

It catalyses the reaction (2E)-geranyl diphosphate = (E)-beta-ocimene + diphosphate. The enzyme catalyses (2E,6E)-farnesyl diphosphate = (3E,6E)-alpha-farnesene + diphosphate. The catalysed reaction is (2E,6E,10E)-geranylgeranyl diphosphate = (E,E,E)-alpha-springene + diphosphate. Terpene synthase that shows monoterpene synthase activity and produces (E)-beta-ocimene as a major product, using geranyl diphosphate (GPP) as substrate. Also shows sesquiterpene synthase activity as it is able to convert farnesyl diphosphate (FPP) into (E,E)-alpha-farnesene. Finally, TPS2 can convert geranylgeranyl diphosphate into (E,E,E)-alpha-springene. The chain is IDS-like terpene synthase 2 from Melampsora lini (Rust fungus).